Reading from the N-terminus, the 224-residue chain is Probable octanoyltransferase (224 aa).

The BPL/LPL catalytic domain maps to 28 to 199 (GLTGDIALVT…KLALELGLTP (172 aa)). Residues 66-73 (RGGDATYH), 130-132 (SIG), and 143-145 (GVA) contribute to the substrate site. Cysteine 161 functions as the Acyl-thioester intermediate in the catalytic mechanism.

Belongs to the LipB family.

The protein localises to the cytoplasm. It carries out the reaction octanoyl-[ACP] + L-lysyl-[protein] = N(6)-octanoyl-L-lysyl-[protein] + holo-[ACP] + H(+). Its pathway is protein modification; protein lipoylation via endogenous pathway; protein N(6)-(lipoyl)lysine from octanoyl-[acyl-carrier-protein]: step 1/2. In terms of biological role, catalyzes the transfer of endogenously produced octanoic acid from octanoyl-acyl-carrier-protein onto the lipoyl domains of lipoate-dependent enzymes. Lipoyl-ACP can also act as a substrate although octanoyl-ACP is likely to be the physiological substrate. In Pyrobaculum aerophilum (strain ATCC 51768 / DSM 7523 / JCM 9630 / CIP 104966 / NBRC 100827 / IM2), this protein is Probable octanoyltransferase.